A 189-amino-acid chain; its full sequence is Protein Rex (189 aa).

Positions 1–16 are enriched in basic residues; that stretch reads MPKTRRRPRRSQRKRP. Residues 1–27 are disordered; the sequence is MPKTRRRPRRSQRKRPPTPWPTSQGLD. The Nuclear localization signal, and RNA-binding (RxRE) motif lies at 2–18; the sequence is PKTRRRPRRSQRKRPPT. The segment at 56 to 70 is homomultimerization; that stretch reads RPAYIVTPYWPPVQS. Ser-70 carries the post-translational modification Phosphoserine; by host. The segment at 73–189 is disordered; the sequence is SPGTPSMDAL…PPSPGPSCPT (117 aa). A compositionally biased stretch (low complexity) spans 80–94; sequence DALSAQLYSSLSLDS. Residues 82 to 93 carry the Nuclear export signal motif; that stretch reads LSAQLYSSLSLD. A homomultimerization region spans residues 123 to 131; that stretch reads PSSRPCANT. A compositionally biased stretch (polar residues) spans 143–164; it reads LGSTSQPCLFQTPDSGPKTCTP. Thr-174 bears the Phosphothreonine; by host mark. Phosphoserine; by host is present on Ser-177. Over residues 178 to 189 the composition is skewed to pro residues; it reads FPPPSPGPSCPT.

This sequence belongs to the deltaretrovirus Rex protein family. Homomultimer. Multimeric assembly is essential for activity and involves XPO1. Binds to human XPO1 and KPNB1. Interacts (via N-terminal nuclear localization signal) with human NPM1.

It localises to the host nucleus. It is found in the host nucleolus. Its subcellular location is the host cytoplasm. Its function is as follows. Rex escorts unspliced gag-pro-pol and singly spliced env mRNAs out of the nucleus of infected cells. These mRNAs carry a recognition sequence called Rex responsive element (RxRE or XRE) located at the 3' region of the long terminal repeat (LTR). This function is essential since most HTLV proteins are translated from unspliced or partially spliced pre-mRNAs that cannot exit the nucleus by the pathway used by fully processed cellular mRNAs. Rex itself is translated from a fully spliced mRNA that probably readily exits the nucleus. Rex's nuclear localization signal (NLS) binds directly to KPNB1/importin beta-1 without previous binding to KPNA1/importin alpha-1. KPNB1 binds to the GDP bound form of RAN (Ran-GDP) and targets Rex to the nucleus. In the nucleus, the conversion from Ran-GDP to Ran-GTP dissociates Rex from KPNB1 and allows Rex's binding to the RRE in viral pre-mRNAs. Rex multimerizes on the RRE via cooperative assembly. This multimerization is critical for its full biological activity, since it may shield the viral RNA from being spliced or down-regulated, and probably exposes Rex's nuclear export signal (NES) to the surface. Rex can then form a complex with XPO1/CRM1, RANBP3 and Ran-GTP, leading to nuclear export of the complex. Conversion from Ran-GTP to Ran-GDP mediates dissociation of the Rex/RRE/XPO1/RANBP3/RAN complex, so that Rex can return to the nucleus for a subsequent round of export. This is Protein Rex from Human T-cell leukemia virus 1 (strain Japan ATK-1 subtype A) (HTLV-1).